Here is a 309-residue protein sequence, read N- to C-terminus: HPr kinase/phosphorylase (309 aa).

Active-site residues include H144 and K165. 159-166 serves as a coordination point for ATP; it reads GDSGLGKS. Residue S166 coordinates Mg(2+). D183 serves as the catalytic Proton acceptor; for phosphorylation activity. Proton donor; for dephosphorylation activity. The interval 206–215 is important for the catalytic mechanism of both phosphorylation and dephosphorylation; sequence IEVRGLGLID. Mg(2+) is bound at residue E207. R249 is an active-site residue. The interval 270 to 275 is important for the catalytic mechanism of dephosphorylation; it reads PIRQGR.

Belongs to the HPrK/P family. As to quaternary structure, homohexamer. Mg(2+) is required as a cofactor.

It catalyses the reaction [HPr protein]-L-serine + ATP = [HPr protein]-O-phospho-L-serine + ADP + H(+). The catalysed reaction is [HPr protein]-O-phospho-L-serine + phosphate + H(+) = [HPr protein]-L-serine + diphosphate. In terms of biological role, catalyzes the ATP- as well as the pyrophosphate-dependent phosphorylation of a specific serine residue in HPr, a phosphocarrier protein of the phosphoenolpyruvate-dependent sugar phosphotransferase system (PTS). HprK/P also catalyzes the pyrophosphate-producing, inorganic phosphate-dependent dephosphorylation (phosphorolysis) of seryl-phosphorylated HPr (P-Ser-HPr). The polypeptide is HPr kinase/phosphorylase (hprK) (Mycoplasmopsis pulmonis (strain UAB CTIP) (Mycoplasma pulmonis)).